The primary structure comprises 136 residues: Type II nicking enzyme V.XorIIP (136 aa).

The protein belongs to the Vsr family.

May nick XorII sequences that contain T/G mispairs resulting from m5C-deamination. If unrepaired, these mismatches can lead to C-to-T transition mutations. The very short patch (VSP) repair process counteracts the mutagenic process by repairing the mismatches in favor of the G-containing strand. This enzyme is an endonuclease that nicks double-stranded DNA within the sequence CGATCG (C-methylation site unknown) next to the thymidine residue that is mismatched to 2'-deoxyguanosine. The incision is mismatch-dependent and strand-specific. The polypeptide is Type II nicking enzyme V.XorIIP (Xanthomonas oryzae pv. oryzae (strain KACC10331 / KXO85)).